The chain runs to 344 residues: Uroporphyrinogen decarboxylase (344 aa).

Substrate-binding positions include 26 to 30 (RQAGR), F45, D75, Y151, S206, and H320.

The protein belongs to the uroporphyrinogen decarboxylase family. Homodimer.

The protein localises to the cytoplasm. It catalyses the reaction uroporphyrinogen III + 4 H(+) = coproporphyrinogen III + 4 CO2. The protein operates within porphyrin-containing compound metabolism; protoporphyrin-IX biosynthesis; coproporphyrinogen-III from 5-aminolevulinate: step 4/4. Catalyzes the decarboxylation of four acetate groups of uroporphyrinogen-III to yield coproporphyrinogen-III. The polypeptide is Uroporphyrinogen decarboxylase (Staphylococcus saprophyticus subsp. saprophyticus (strain ATCC 15305 / DSM 20229 / NCIMB 8711 / NCTC 7292 / S-41)).